We begin with the raw amino-acid sequence, 201 residues long: tRNA (guanine-N(7)-)-methyltransferase (201 aa).

Positions 33, 58, 85, and 106 each coordinate S-adenosyl-L-methionine. Asp-106 is an active-site residue. Substrate contacts are provided by residues Lys-110, Asp-142, and 180 to 183; that span reads TTYE.

It belongs to the class I-like SAM-binding methyltransferase superfamily. TrmB family.

It carries out the reaction guanosine(46) in tRNA + S-adenosyl-L-methionine = N(7)-methylguanosine(46) in tRNA + S-adenosyl-L-homocysteine. It participates in tRNA modification; N(7)-methylguanine-tRNA biosynthesis. In terms of biological role, catalyzes the formation of N(7)-methylguanine at position 46 (m7G46) in tRNA. This chain is tRNA (guanine-N(7)-)-methyltransferase, found in Mesomycoplasma hyopneumoniae (strain J / ATCC 25934 / NCTC 10110) (Mycoplasma hyopneumoniae).